Reading from the N-terminus, the 303-residue chain is Plasmodesmata-located protein 1 (303 aa).

The signal sequence occupies residues 1-21 (MKLTYQFFIFWFFLPFFAISG). Topologically, residues 22–268 (DDDYKNLIFK…GEKRQHTERT (247 aa)) are extracellular. 2 consecutive Gnk2-homologous domains span residues 27–136 (NLIF…SSGF) and 141–248 (GTEM…YYSH). Intrachain disulfides connect C33–C108, C84–C93, C96–C127, C149–C226, C202–C211, and C214–C239. Residues 269-289 (IALAVGGVFVLGFVIVCLLVL) traverse the membrane as a helical segment. The segment at 269–289 (IALAVGGVFVLGFVIVCLLVL) is necessary and sufficient for plasmodesmal targeting. The Cytoplasmic portion of the chain corresponds to 290 to 303 (RSAMKKKSNKYDAY).

Belongs to the cysteine-rich repeat secretory protein family. Plasmodesmata-located proteins (PDLD) subfamily. Interacts with AZI1. Interacts with PDLP5. Does not interact with DIR1. In terms of assembly, (Microbial infection) Interacts with Grapevine fanleaf virus (GFLV) 2B-MP. Interacts with Cauliflower mosaic virus (CaMV) movement protein. Highly expressed in cell suspension. Expressed in epidermal and spongy mesophyll cells, and the cell wall interface at the base of the leaf trichome (at protein level). Expressed in haustoria-containing cells.

It is found in the cell membrane. The protein resides in the cell junction. Its subcellular location is the plasmodesma. In terms of biological role, modulates cell-to-cell trafficking. Required for systemic acquired resistance (SAR) which is mediated by the signaling molecules azelaic acid (AzA), glycerol-3-phosphate (G3P), and salicylic acid (SA). Required for the proper localization and stability of AZI1 which is involved in SAR. Mediates callose deposition during downy mildew fungal infection around haustoria. Haustoria are unicellular protrusions from hyphae and function as the site of molecular exchange of nutrients and effectors between host and pathogen. This is Plasmodesmata-located protein 1 from Arabidopsis thaliana (Mouse-ear cress).